The primary structure comprises 324 residues: Zinc transporter ZIP1 (324 aa).

The Extracellular portion of the chain corresponds to methionine 1–lysine 30. The helical transmembrane segment at leucine 31–valine 51 threads the bilayer. At leucine 52–alanine 68 the chain is on the cytoplasmic side. A helical membrane pass occupies residues leucine 69–leucine 89. Residues proline 90 to histidine 104 are Extracellular-facing. Residues valine 105–valine 125 form a helical membrane-spanning segment. Residues methionine 126–arginine 179 lie on the Cytoplasmic side of the membrane. The helical transmembrane segment at alanine 180 to leucine 200 threads the bilayer. Over glutamine 201 to arginine 206 the chain is Extracellular. The helical transmembrane segment at alanine 207–leucine 227 threads the bilayer. The Cytoplasmic segment spans residues arginine 228–glutamine 237. Residues valine 238–alanine 258 traverse the membrane as a helical segment. The Extracellular portion of the chain corresponds to alanine 259–glutamine 272. A helical membrane pass occupies residues serine 273–proline 293. The Cytoplasmic portion of the chain corresponds to glutamine 294–isoleucine 303. The chain crosses the membrane as a helical span at residues leucine 304–isoleucine 324.

This sequence belongs to the ZIP transporter (TC 2.A.5) family. Ubiquitous. Expressed in most adult and fetal tissues including the epidermis.

The protein resides in the cell membrane. It localises to the endoplasmic reticulum membrane. The enzyme catalyses Zn(2+)(in) = Zn(2+)(out). With respect to regulation, inhibited by Ni(2+) ions. Fe(2+) ions do not inhibit zinc uptake. Functionally, transporter for the divalent cation Zn(2+). Mediates the influx of Zn(2+) into cells from extracellular space. Functions as the major importer of zinc from circulating blood plasma into prostate cells. The sequence is that of Zinc transporter ZIP1 from Homo sapiens (Human).